The chain runs to 265 residues: Mlc titration factor A (265 aa).

The Zn(2+) site is built by histidine 111, histidine 148, histidine 152, and glutamate 211.

Belongs to the MtfA family. Interacts with Mlc. Zn(2+) serves as cofactor.

The protein resides in the cytoplasm. Involved in the modulation of the activity of the glucose-phosphotransferase system (glucose-PTS). Interacts with the transcriptional repressor Mlc, preventing its interaction with DNA and leading to the modulation of expression of genes regulated by Mlc, including ptsG, which encodes the PTS system glucose-specific EIICB component. Its function is as follows. Shows zinc-dependent metallopeptidase activity. This chain is Mlc titration factor A, found in Escherichia coli (strain 55989 / EAEC).